The following is a 212-amino-acid chain: Ependymin (212 aa).

A signal peptide spans 1 to 20; that stretch reads MRLTGLLCVALWSASAVVLA. Asn69, Asn92, and Asn112 each carry an N-linked (GlcNAc...) asparagine glycan.

Belongs to the ependymin family. As to quaternary structure, forms disulfide-linked dimers. Binds calcium through the terminal sialic acids. As to expression, EPDs are synthesized in the meninx and secreted in the cerebrospinal fluid.

It localises to the secreted. Functionally, may play a role in neural plasticity. May be involved during axon regeneration. The sequence is that of Ependymin (epd) from Clupea harengus (Atlantic herring).